A 925-amino-acid polypeptide reads, in one-letter code: Neuropilin-2 (925 aa).

The N-terminal stretch at 1-22 (MDMFPLTWIFLALYFSGHKVRS) is a signal peptide. The Extracellular segment spans residues 23 to 858 (QQDPPCGGRL…EKSWLYTLDP (836 aa)). Cystine bridges form between C28–C55, C83–C105, and C149–C175. CUB domains are found at residues 28-142 (CGGR…YEIF) and 149-267 (CSKN…YYLV). N152 and N157 each carry an N-linked (GlcNAc...) asparagine glycan. The Ca(2+) site is built by E197, D211, and D252. A disulfide bridge links C208 with C230. 2 cysteine pairs are disulfide-bonded: C277-C427 and C434-C592. F5/8 type C domains are found at residues 277-427 (CNAP…LFGC) and 434-592 (CSNM…VLGC). The segment covering 297 to 310 (STFSDGRWTPQQSR) has biased composition (polar residues). The interval 297 to 317 (STFSDGRWTPQQSRLHGDDNG) is disordered. The interval 601-621 (VETLGPTVKSEETTTPYPMDE) is disordered. N629 carries an N-linked (GlcNAc...) asparagine glycan. An MAM domain is found at 642 to 802 (SGFNCNFDFP…TDVPLENCME (161 aa)). Over residues 820–830 (YEDEIDDDYEG) the composition is skewed to acidic residues. The interval 820-849 (YEDEIDDDYEGDWNNSSSTSGAGSPSSGKE) is disordered. N833 and N834 each carry an N-linked (GlcNAc...) asparagine glycan. Residues 835–846 (SSSTSGAGSPSS) are compositionally biased toward low complexity. Residues 859–883 (ILITIIAMSSLGVLLGATCAGLLLY) traverse the membrane as a helical segment. Residues 884–925 (CTCSYSGLSSRSCTTLENYNFELYDGLKHKVKINHQKCCSEA) lie on the Cytoplasmic side of the membrane.

This sequence belongs to the neuropilin family. Heterodimer with NRP1. Binds PLXNB1. As to expression, found in certain neuronal populations of the CNS, including dorsal root ganglia, and in other non-neuronal tissues including mesenchymal tissue lining in the ribs.

It localises to the membrane. In terms of biological role, high affinity receptor for semaphorins 3C, 3F, VEGF-165 and VEGF-145 isoforms of VEGF, and the PLGF-2 isoform of PGF. This chain is Neuropilin-2 (Nrp2), found in Rattus norvegicus (Rat).